The chain runs to 82 residues: MIKLRLKRFGKKREASYRIVAAVSTSRRDGRPLEELGFYNPRTDEVRLDEEGIIRRLQQGAQPTDTVRSILTKQKIFEKINA.

The protein belongs to the bacterial ribosomal protein bS16 family.

The polypeptide is Small ribosomal subunit protein bS16 (Microcystis aeruginosa (strain NIES-843 / IAM M-2473)).